A 392-amino-acid chain; its full sequence is Phosphoglycerate kinase (392 aa).

Substrate is bound by residues 21–23 (DLN), arginine 36, 59–62 (HLGR), arginine 113, and arginine 146. ATP-binding positions include lysine 197, glutamate 319, and 345–348 (GGDT).

This sequence belongs to the phosphoglycerate kinase family. As to quaternary structure, monomer.

The protein resides in the cytoplasm. It carries out the reaction (2R)-3-phosphoglycerate + ATP = (2R)-3-phospho-glyceroyl phosphate + ADP. It participates in carbohydrate degradation; glycolysis; pyruvate from D-glyceraldehyde 3-phosphate: step 2/5. The sequence is that of Phosphoglycerate kinase from Thioalkalivibrio sulfidiphilus (strain HL-EbGR7).